The chain runs to 359 residues: Pyruvate dehydrogenase E1 component subunit beta, mitochondrial (359 aa).

Residues 1-19 (MLGVIRNKTIRPSFSAFRF) constitute a mitochondrion transit peptide. E82 is a binding site for thiamine diphosphate. 4 residues coordinate K(+): I135, A183, I184, and D186.

In terms of assembly, tetramer of 2 alpha and 2 beta subunits. Requires thiamine diphosphate as cofactor.

It is found in the mitochondrion matrix. It catalyses the reaction N(6)-[(R)-lipoyl]-L-lysyl-[protein] + pyruvate + H(+) = N(6)-[(R)-S(8)-acetyldihydrolipoyl]-L-lysyl-[protein] + CO2. Functionally, the pyruvate dehydrogenase complex catalyzes the overall conversion of pyruvate to acetyl-CoA and CO(2). It contains multiple copies of three enzymatic components: pyruvate dehydrogenase (E1), dihydrolipoamide acetyltransferase (E2) and lipoamide dehydrogenase (E3). In Pisum sativum (Garden pea), this protein is Pyruvate dehydrogenase E1 component subunit beta, mitochondrial.